A 422-amino-acid polypeptide reads, in one-letter code: F-box/WD repeat-containing protein 2 (422 aa).

The F-box domain maps to 54-101 (RDFLKLLPLELSFYLLKWLDPQTLLTCCLVSKQWNKVISACTEVWQTA). 4 WD repeats span residues 146-183 (GHSARVYALYYKDGLLCTGSDDLSAKLWDVSTGQCVYG), 185-221 (QTHTCAAVKFDEQKLVTGSFDNTVACWEWSSGARTQH), 224-265 (GHTG…NTLT), and 276-314 (LQKCKVKSLLHSPGDYILLSADKYEIKIWPIGREINCKC). K298 carries the N6-acetyllysine modification.

Directly interacts with SKP1 and CUL1. In terms of tissue distribution, widely expressed during embryogenesis and in adult tissues.

In terms of biological role, substrate-recognition component of the SCF (SKP1-CUL1-F-box protein)-type E3 ubiquitin ligase complex. The chain is F-box/WD repeat-containing protein 2 (Fbxw2) from Mus musculus (Mouse).